A 223-amino-acid polypeptide reads, in one-letter code: Small ribosomal subunit protein uS3 (223 aa).

The KH type-2 domain maps to 39 to 108 (IRNFVKKNSY…NILINIVEVK (70 aa)).

It belongs to the universal ribosomal protein uS3 family. In terms of assembly, part of the 30S ribosomal subunit. Forms a tight complex with proteins S10 and S14.

Binds the lower part of the 30S subunit head. Binds mRNA in the 70S ribosome, positioning it for translation. The protein is Small ribosomal subunit protein uS3 of Clostridium botulinum (strain 657 / Type Ba4).